A 592-amino-acid chain; its full sequence is Arginine--tRNA ligase (592 aa).

A 'HIGH' region motif is present at residues 134–144 (ANPTGPLHVGH).

This sequence belongs to the class-I aminoacyl-tRNA synthetase family. In terms of assembly, monomer.

The protein localises to the cytoplasm. The enzyme catalyses tRNA(Arg) + L-arginine + ATP = L-arginyl-tRNA(Arg) + AMP + diphosphate. This chain is Arginine--tRNA ligase, found in Coxiella burnetii (strain RSA 493 / Nine Mile phase I).